A 465-amino-acid chain; its full sequence is Mothers against decapentaplegic homolog 1 (465 aa).

Residues 12–136 form the MH1 domain; it reads PAVKRLLGWK…YKRVESPVLP (125 aa). 4 residues coordinate Zn(2+): Cys-64, Cys-109, Cys-121, and His-126. The segment at 161-240 is disordered; that stretch reads QNEPHMPHNA…EDQMTHDTSQ (80 aa). Over residues 179-210 the composition is skewed to low complexity; that stretch reads PNSHPFPHSPNSSYPNSPGSSSSTYPHSPASS. In terms of domain architecture, MH2 spans 271-465; it reads WCSIVYYELN…SPHNPISSVS (195 aa). Residues Ser-463 and Ser-465 each carry the phosphoserine modification.

It belongs to the dwarfin/SMAD family. As to quaternary structure, found in a complex with SMAD4 and YY1. Interacts with HGS, NANOG and ZCCHC12. Upon C-terminus phosphorylation: forms trimers with another SMAD1 and the co-SMAD SMAD4. Interacts with PEBP2-alpha subunit, CREB-binding protein (CBP), p300, SMURF1, SMURF2, USP15 and HOXC8. Associates with ZNF423 or ZNF521 in response to BMP2 leading to activate transcription of BMP target genes. Interacts with SKOR1. Interacts (via MH2 domain) with LEMD3. Binding to LEMD3 results in at least a partial reduction of receptor-mediated phosphorylation. Forms a ternary complex with PSMB4 and OAZ1 before PSMB4 is incorporated into the 20S proteasome. Found in a macromolecular complex with FAM83G. Interacts (via MH2 domain) with FAM83G (via MH2 domain); in a SMAD4-independent manner. Interacts with ZC3H3. Interacts with TMEM119. Interacts (via MH1 and MH2 domains) with ZNF8. Interacts with RANBP3L; the interaction increases when SMAD1 is not phosphorylated and mediates SMAD1 nuclear export. Interacts with EGR1; this interaction inhibits SMAD1 dephosphorylation. Interacts with SMAD6. Interacts with YAP1. In terms of processing, phosphorylation of the C-terminal SVS motif by BMP type 1 receptor kinase activates SMAD1 by promoting dissociation from the receptor and trimerization with SMAD4. Phosphorylation by ERK2 MAP kinase in response to EGF or HGF prevents SMAD1 nuclear accumulation and transcriptional activity in response to BMP. Dephosphorylation, probably by PPM1A, induces its export from the nucleus to the cytoplasm. Dephosphorylation is inhibited by association with EGR1. Phosphorylation by CDK8/9 creates binding sites for YAP1, and subsequent phosphorylation by GSK3 switches off YAP1 binding and adds binding sites for SMURF1. Post-translationally, ubiquitinated by SMAD-specific E3 ubiquitin ligase SMURF1, leading to its degradation. Monoubiquitinated, leading to prevent DNA-binding. Deubiquitination by USP15 alleviates inhibition and promotes activation of TGF-beta target genes. Dephosphorylation, probably by PPM1A, induces its export from the nucleus to the cytoplasm. Phospho-SMAD1 is ubiquitinated by CHIP leading to disruption of the SMAD1-SMAD4 complex.

Its subcellular location is the cytoplasm. The protein localises to the nucleus. In terms of biological role, transcriptional modulator that plays a role in various cellular processes, including embryonic development, cell differentiation, and tissue homeostasis. Upon BMP ligand binding to their receptors at the cell surface, is phosphorylated by activated type I BMP receptors (BMPRIs) and associates with SMAD4 to form an heteromeric complex which translocates into the nucleus acting as transcription factor. In turn, the hetero-trimeric complex recognizes cis-regulatory elements containing Smad Binding Elements (SBEs) to modulate the outcome of the signaling network. SMAD1/OAZ1/PSMB4 complex mediates the degradation of the CREBBP/EP300 repressor SNIP1. In Coturnix japonica (Japanese quail), this protein is Mothers against decapentaplegic homolog 1 (SMAD1).